A 578-amino-acid chain; its full sequence is uncharacterized protein (578 aa).

This is an uncharacterized protein from Eikenella corrodens.